Reading from the N-terminus, the 407-residue chain is MESAITLWQFLLQLLLDQKHEHLICWTSNDGEFKLLKAEEVAKLWGLRKNKTNMNYDKLSRALRYYYDKNIIKKVIGQKFVYKFVSFPEILKMDPHAVEISRESLLLQDSDCKASPEGREAHKHGLAALRSTSRNEYIHSGLYSSFTINSLQNPPDAFKAIKTEKLEEPPEDSPPVEEVRTVIRFVTNKTDKHVTRPVVSLPSTSEAAAASAFLASSVSAKISSLMLPNAASISSASPFSSRSPSLSPNSPLPSEHRSLFLEAACHDSDSLEPLNLSSGSKTKSPSLPPKAKKPKGLEISAPPLVLSGTDIGSIALNSPALPSGSLTPAFFTAQTPNGLLLTPSPLLSSIHFWSSLSPVAPLSPARLQGPSTLFQFPTLLNGHMPVPIPSLDRAASPVLLSSNSQKS.

Positions 5-85 (ITLWQFLLQL…IGQKFVYKFV (81 aa)) form a DNA-binding region, ETS. Residue Lys92 forms a Glycyl lysine isopeptide (Lys-Gly) (interchain with G-Cter in SUMO2) linkage. Ser115 is subject to Phosphoserine. Residue Lys165 forms a Glycyl lysine isopeptide (Lys-Gly) (interchain with G-Cter in SUMO2) linkage. Disordered regions lie at residues 234–253 (SSASPFSSRSPSLSPNSPLP) and 271–298 (LEPLNLSSGSKTKSPSLPPKAKKPKGLE). The short motif at 273-277 (PLNLS) is the CTBP-binding motif element. Ser396 is modified (phosphoserine).

The protein belongs to the ETS family. As to quaternary structure, interacts with CTBP1.

It is found in the nucleus. Its function is as follows. May be a negative regulator of transcription, but can activate transcription when coexpressed with Ras, Src or Mos. Forms a ternary complex with the serum response factor and the ETS and SRF motifs of the Fos serum response element. In Homo sapiens (Human), this protein is ETS domain-containing protein Elk-3 (ELK3).